Reading from the N-terminus, the 406-residue chain is Putative permease Rv2963 (406 aa).

Transmembrane regions (helical) follow at residues 30–50 (WEIL…QAVV), 67–87 (LVIA…AVAL), 111–131 (LVVE…TAAE), 132–152 (FVGG…FVGA), 208–228 (LAIL…AAWV), 246–266 (AVWG…CSIG), 278–298 (GISF…LPIL), 312–332 (VLLG…ELLF), and 361–381 (VIFL…GGLP).

The protein belongs to the UPF0718 family.

Its subcellular location is the cell membrane. This Mycobacterium tuberculosis (strain ATCC 25618 / H37Rv) protein is Putative permease Rv2963.